The chain runs to 377 residues: Cell division protein FtsZ (377 aa).

Residues 1 to 16 (MDSIVDDAIDEAEDMG) are compositionally biased toward acidic residues. The segment at 1–33 (MDSIVDDAIDEAEDMGDGSAEVGGPTDINRSGT) is disordered. Residues 57–61 (GAGGN), 144–146 (GTG), Glu175, Arg179, and Asp222 contribute to the GTP site.

This sequence belongs to the FtsZ family. As to quaternary structure, homodimer. Polymerizes to form a dynamic ring structure in a strictly GTP-dependent manner. Interacts directly with several other division proteins.

The protein resides in the cytoplasm. Its function is as follows. Essential cell division protein that forms a contractile ring structure (Z ring) at the future cell division site. The regulation of the ring assembly controls the timing and the location of cell division. One of the functions of the FtsZ ring is to recruit other cell division proteins to the septum to produce a new cell wall between the dividing cells. Binds GTP and shows GTPase activity. This is Cell division protein FtsZ from Haloferax mediterranei (strain ATCC 33500 / DSM 1411 / JCM 8866 / NBRC 14739 / NCIMB 2177 / R-4) (Halobacterium mediterranei).